The primary structure comprises 109 residues: Nucleoid-associated protein Sbal223_1770 (109 aa).

It belongs to the YbaB/EbfC family. In terms of assembly, homodimer.

It localises to the cytoplasm. The protein resides in the nucleoid. Binds to DNA and alters its conformation. May be involved in regulation of gene expression, nucleoid organization and DNA protection. This chain is Nucleoid-associated protein Sbal223_1770, found in Shewanella baltica (strain OS223).